The chain runs to 139 residues: uncharacterized protein (139 aa).

It to M.tuberculosis Rv2798c.

This is an uncharacterized protein from Mycobacterium tuberculosis (strain CDC 1551 / Oshkosh).